A 71-amino-acid polypeptide reads, in one-letter code: Large ribosomal subunit protein eL38 (71 aa).

The protein belongs to the eukaryotic ribosomal protein eL38 family.

In Argas monolakensis (Mono lake bird tick), this protein is Large ribosomal subunit protein eL38 (RpL38).